The primary structure comprises 224 residues: Na(+)-translocating NADH-quinone reductase subunit D (224 aa).

A run of 5 helical transmembrane segments spans residues 43 to 63 (TVMA…ISMI), 67 to 87 (IPSS…VIVV), 104 to 124 (VFVG…AFAM), 132 to 152 (FFDG…LGFV), and 179 to 199 (NGLL…IWAL).

This sequence belongs to the NqrDE/RnfAE family. In terms of assembly, composed of six subunits; NqrA, NqrB, NqrC, NqrD, NqrE and NqrF.

It localises to the cell inner membrane. It carries out the reaction a ubiquinone + n Na(+)(in) + NADH + H(+) = a ubiquinol + n Na(+)(out) + NAD(+). Its function is as follows. NQR complex catalyzes the reduction of ubiquinone-1 to ubiquinol by two successive reactions, coupled with the transport of Na(+) ions from the cytoplasm to the periplasm. NqrA to NqrE are probably involved in the second step, the conversion of ubisemiquinone to ubiquinol. The chain is Na(+)-translocating NADH-quinone reductase subunit D from Pseudomonas aeruginosa (strain LESB58).